Here is a 267-residue protein sequence, read N- to C-terminus: 3-methyl-2-oxobutanoate hydroxymethyltransferase (267 aa).

D45 and D84 together coordinate Mg(2+). 3-methyl-2-oxobutanoate is bound by residues 45-46 (DS), D84, and K113. Residue E115 coordinates Mg(2+). E182 acts as the Proton acceptor in catalysis.

This sequence belongs to the PanB family. As to quaternary structure, homodecamer; pentamer of dimers. It depends on Mg(2+) as a cofactor.

It is found in the cytoplasm. It carries out the reaction 3-methyl-2-oxobutanoate + (6R)-5,10-methylene-5,6,7,8-tetrahydrofolate + H2O = 2-dehydropantoate + (6S)-5,6,7,8-tetrahydrofolate. Its pathway is cofactor biosynthesis; coenzyme A biosynthesis. Functionally, catalyzes the reversible reaction in which hydroxymethyl group from 5,10-methylenetetrahydrofolate is transferred onto alpha-ketoisovalerate to form ketopantoate. The polypeptide is 3-methyl-2-oxobutanoate hydroxymethyltransferase (Saccharolobus islandicus (strain Y.N.15.51 / Yellowstone #2) (Sulfolobus islandicus)).